A 348-amino-acid polypeptide reads, in one-letter code: uncharacterized protein (348 aa).

This is an uncharacterized protein from Sulfolobus islandicus filamentous virus (isolate Iceland/Hveragerdi) (SIFV).